The primary structure comprises 185 residues: Large ribosomal subunit protein uL5 (185 aa).

Belongs to the universal ribosomal protein uL5 family. As to quaternary structure, part of the 50S ribosomal subunit; part of the 5S rRNA/L5/L18/L25 subcomplex. Contacts the 5S rRNA and the P site tRNA. Forms a bridge to the 30S subunit in the 70S ribosome.

In terms of biological role, this is one of the proteins that bind and probably mediate the attachment of the 5S RNA into the large ribosomal subunit, where it forms part of the central protuberance. In the 70S ribosome it contacts protein S13 of the 30S subunit (bridge B1b), connecting the 2 subunits; this bridge is implicated in subunit movement. Contacts the P site tRNA; the 5S rRNA and some of its associated proteins might help stabilize positioning of ribosome-bound tRNAs. This chain is Large ribosomal subunit protein uL5, found in Bradyrhizobium sp. (strain ORS 278).